Consider the following 623-residue polypeptide: tRNA 5-methylaminomethyl-2-thiouridine biosynthesis bifunctional protein MnmC (623 aa).

Positions 1–244 (MCVSSSIQTA…KREMLKAIWP (244 aa)) are tRNA (mnm(5)s(2)U34)-methyltransferase. Positions 268–623 (IGAGIAGLHC…VKIKKPYYSS (356 aa)) are FAD-dependent cmnm(5)s(2)U34 oxidoreductase.

The protein in the N-terminal section; belongs to the methyltransferase superfamily. tRNA (mnm(5)s(2)U34)-methyltransferase family. This sequence in the C-terminal section; belongs to the DAO family. Requires FAD as cofactor.

It localises to the cytoplasm. The enzyme catalyses 5-aminomethyl-2-thiouridine(34) in tRNA + S-adenosyl-L-methionine = 5-methylaminomethyl-2-thiouridine(34) in tRNA + S-adenosyl-L-homocysteine + H(+). Its function is as follows. Catalyzes the last two steps in the biosynthesis of 5-methylaminomethyl-2-thiouridine (mnm(5)s(2)U) at the wobble position (U34) in tRNA. Catalyzes the FAD-dependent demodification of cmnm(5)s(2)U34 to nm(5)s(2)U34, followed by the transfer of a methyl group from S-adenosyl-L-methionine to nm(5)s(2)U34, to form mnm(5)s(2)U34. In Acinetobacter baylyi (strain ATCC 33305 / BD413 / ADP1), this protein is tRNA 5-methylaminomethyl-2-thiouridine biosynthesis bifunctional protein MnmC.